Here is a 499-residue protein sequence, read N- to C-terminus: Protein singed wings 2 (499 aa).

Residues 1–29 form the signal peptide; the sequence is MPSGVFQKRPKAAETISLFCMILIRLSRA. 2 LRR repeats span residues 154–175 and 178–199; these read ELHT…TFKR and PLKV…LLLP. One can recognise an LRRCT 1 domain in the interval 210 to 265; that stretch reads NPWNCTRNFKWLLLQPEKGRLVVDRDELICTDRKYKERQMLMVMHYKLELKRQCQS. LRR repeat units lie at residues 307–328, 332–353, and 357–378; these read NTTT…RDNP, HVVD…EDTY, and NFRL…ALDN. The 56-residue stretch at 394–449 folds into the LRRCT 2 domain; the sequence is NPWHCTCKFGSRMRELLTKYKDIVRDAWNVSCTYRLDDDQLLAKVLTLSRQEMCNL.

Functionally, has a role in the ecdysone induced cascade; probably indirect control of 'late' ecdysone genes. This is Protein singed wings 2 from Drosophila melanogaster (Fruit fly).